We begin with the raw amino-acid sequence, 129 residues long: Ribulose bisphosphate carboxylase small subunit (129 aa).

Belongs to the RuBisCO small chain family. As to quaternary structure, heterohexadecamer of 8 large and 8 small subunits.

RuBisCO catalyzes two reactions: the carboxylation of D-ribulose 1,5-bisphosphate, the primary event in carbon dioxide fixation, as well as the oxidative fragmentation of the pentose substrate. Both reactions occur simultaneously and in competition at the same active site. Although the small subunit is not catalytic it is essential for maximal activity. The chain is Ribulose bisphosphate carboxylase small subunit from Cereibacter sphaeroides (Rhodobacter sphaeroides).